The sequence spans 522 residues: WEB family protein At2g38370 (522 aa).

The segment at 1–32 is disordered; that stretch reads MAEFPEPGTVNPDSDLSNGRAEKPEIDTSAPF. 2 coiled-coil regions span residues 77–264 and 299–376; these read ELQR…AARE and ARSA…RSEN. Disordered stretches follow at residues 374 to 397 and 458 to 493; these read SENGQRRRLSSSVNNTSKFKSRRE and MSLGQMLAKNSSSDKTVSKRSEGKENEKRTKTRKRK. Residues 473–486 are compositionally biased toward basic and acidic residues; sequence TVSKRSEGKENEKR.

This sequence belongs to the WEB family.

This Arabidopsis thaliana (Mouse-ear cress) protein is WEB family protein At2g38370.